The following is a 227-amino-acid chain: Phosphatidylserine decarboxylase proenzyme (227 aa).

S181 functions as the Schiff-base intermediate with substrate; via pyruvic acid in the catalytic mechanism. Position 181 is a pyruvic acid (Ser); by autocatalysis (S181).

It belongs to the phosphatidylserine decarboxylase family. PSD-A subfamily. Heterodimer of a large membrane-associated beta subunit and a small pyruvoyl-containing alpha subunit. It depends on pyruvate as a cofactor. Is synthesized initially as an inactive proenzyme. Formation of the active enzyme involves a self-maturation process in which the active site pyruvoyl group is generated from an internal serine residue via an autocatalytic post-translational modification. Two non-identical subunits are generated from the proenzyme in this reaction, and the pyruvate is formed at the N-terminus of the alpha chain, which is derived from the carboxyl end of the proenzyme. The post-translation cleavage follows an unusual pathway, termed non-hydrolytic serinolysis, in which the side chain hydroxyl group of the serine supplies its oxygen atom to form the C-terminus of the beta chain, while the remainder of the serine residue undergoes an oxidative deamination to produce ammonia and the pyruvoyl prosthetic group on the alpha chain.

The protein resides in the cell membrane. The catalysed reaction is a 1,2-diacyl-sn-glycero-3-phospho-L-serine + H(+) = a 1,2-diacyl-sn-glycero-3-phosphoethanolamine + CO2. The protein operates within phospholipid metabolism; phosphatidylethanolamine biosynthesis; phosphatidylethanolamine from CDP-diacylglycerol: step 2/2. In terms of biological role, catalyzes the formation of phosphatidylethanolamine (PtdEtn) from phosphatidylserine (PtdSer). This is Phosphatidylserine decarboxylase proenzyme from Anaplasma phagocytophilum (strain HZ).